We begin with the raw amino-acid sequence, 703 residues long: uncharacterized protein (703 aa).

4 consecutive transmembrane segments (helical) span residues 23 to 43 (IAMS…DFLI), 69 to 89 (ALSG…AAGG), 143 to 163 (PVIS…ALEA), and 250 to 270 (PPEW…PIGL). Residues 23-335 (IAMSGAISAG…INNDPFEFVR (313 aa)) form the PNPLA domain. Positions 72–76 (GASAG) match the GXSXG motif. S74 acts as the Nucleophile in catalysis. The Proton acceptor role is filled by D322. The DGA/G signature appears at 322–324 (DGG). Helical transmembrane passes span 357–377 (VIMI…EPPL), 432–452 (ETFS…LEAF), and 644–664 (ILST…APWT).

It localises to the cell membrane. This is an uncharacterized protein from Sinorhizobium fredii (strain NBRC 101917 / NGR234).